Consider the following 259-residue polypeptide: MWAIGGVQLNSRLLLGTAQYPSPQLMSDAVKAAGVEIITVSLRRQLSPQKENYFWDLLRSLPCHLLPNTAGCSSVKEAVNTARAARELFNTHWIKLEIIGDEYTLQPNPFELVNAATILVKEGFEVFPYCTEDLILCQRLVDAGCRVLMPWAAPIGSGRGLMNTYALQVLRERFPKNILIIDAGLGRPSHAAQVMEMGFDAVLLNSAVALAMDPVVMAAGFAKAVEGGRLGYEGGMIKARNVAKATTPLIGKPFLIEKP.

Catalysis depends on Lys-95, which acts as the Schiff-base intermediate with DXP. 1-deoxy-D-xylulose 5-phosphate contacts are provided by residues Gly-156, Ala-183–Gly-184, and Asn-205–Ser-206.

The protein belongs to the ThiG family. As to quaternary structure, homotetramer. Forms heterodimers with either ThiH or ThiS.

Its subcellular location is the cytoplasm. The catalysed reaction is [ThiS sulfur-carrier protein]-C-terminal-Gly-aminoethanethioate + 2-iminoacetate + 1-deoxy-D-xylulose 5-phosphate = [ThiS sulfur-carrier protein]-C-terminal Gly-Gly + 2-[(2R,5Z)-2-carboxy-4-methylthiazol-5(2H)-ylidene]ethyl phosphate + 2 H2O + H(+). It participates in cofactor biosynthesis; thiamine diphosphate biosynthesis. Functionally, catalyzes the rearrangement of 1-deoxy-D-xylulose 5-phosphate (DXP) to produce the thiazole phosphate moiety of thiamine. Sulfur is provided by the thiocarboxylate moiety of the carrier protein ThiS. In vitro, sulfur can be provided by H(2)S. The polypeptide is Thiazole synthase (Coxiella burnetii (strain RSA 331 / Henzerling II)).